We begin with the raw amino-acid sequence, 24 residues long: MATRRFSCLLLSTSEIDLSVKRRI.

The protein belongs to the humanin family. In terms of tissue distribution, highly expressed in testis. Also expressed in kidney, heart, skeletal muscles and brain.

Its subcellular location is the secreted. The protein resides in the cytoplasm. Functionally, plays a role as a neuroprotective and antiapoptotic factor. The protein is Humanin-like 3 of Homo sapiens (Human).